The following is a 359-amino-acid chain: Src kinase-associated phosphoprotein 2 (359 aa).

Phosphoserine occurs at positions 5, 6, and 9. The segment at 14-64 (PEEIRNLLADVETFVADILKGENLSKKAKEKRESLIKKIKDVKSIYLQEFQ) is homodimerization. Residues 66 to 88 (KGDAEDGEEYDDPFAGPPDTISL) are disordered. Residue Y75 is modified to Phosphotyrosine. Residues S87 and S90 each carry the phosphoserine modification. The PH domain occupies 116 to 219 (FVLKAGYLEK…WVQQLKFVLQ (104 aa)). Y151 and Y197 each carry phosphotyrosine. Residue S223 is modified to Phosphoserine. Y261 bears the Phosphotyrosine mark. Residues 264–293 (LPEEEEDSAPVKVEEQRKMSQDSVHHTSGD) form a disordered region. A compositionally biased stretch (basic and acidic residues) spans 275-293 (KVEEQRKMSQDSVHHTSGD). Phosphoserine occurs at positions 283 and 286. The SH3 domain occupies 297 to 358 (DYANFYQGLW…PKAYIMEMYD (62 aa)).

This sequence belongs to the SKAP family. As to quaternary structure, homodimer. Interacts with PTPNS1. Part of a complex consisting of SKAP2, FYB1 and PTPNS1. Part of a complex consisting of SKAP2, FYB1 and LILRB3. May interact with actin. Interacts with FYB1, which is required for SKAP2 protein stability. Interacts with LAT, GRB2, PTK2B and PRAM1. May interact with FYN, HCK and LYN. Interacts with FASLG. In terms of processing, phosphorylated in resting platelets. Phosphorylated by FYN on Tyr-261 upon T-cell activation. Dephosphorylated on Tyr-75 by PTPN22. In terms of tissue distribution, ubiquitously expressed. Present in platelets (at protein level).

Its subcellular location is the cytoplasm. Its function is as follows. May be involved in B-cell and macrophage adhesion processes. In B-cells, may act by coupling the B-cell receptor (BCR) to integrin activation. May play a role in src signaling pathway. The sequence is that of Src kinase-associated phosphoprotein 2 (SKAP2) from Homo sapiens (Human).